A 407-amino-acid polypeptide reads, in one-letter code: Phosphoglycerate kinase (407 aa).

Substrate contacts are provided by residues 24-26 (DFN), Arg40, 63-66 (HLGR), Arg121, and Arg154. ATP-binding positions include Lys205, Glu337, and 363 to 366 (GGDS).

It belongs to the phosphoglycerate kinase family. Monomer.

Its subcellular location is the cytoplasm. It carries out the reaction (2R)-3-phosphoglycerate + ATP = (2R)-3-phospho-glyceroyl phosphate + ADP. It functions in the pathway carbohydrate degradation; glycolysis; pyruvate from D-glyceraldehyde 3-phosphate: step 2/5. In Gloeobacter violaceus (strain ATCC 29082 / PCC 7421), this protein is Phosphoglycerate kinase.